A 195-amino-acid polypeptide reads, in one-letter code: 7-methyl-GTP pyrophosphatase (195 aa).

Asp70 acts as the Proton acceptor in catalysis.

Belongs to the Maf family. YceF subfamily. Requires a divalent metal cation as cofactor.

The protein resides in the cytoplasm. It carries out the reaction N(7)-methyl-GTP + H2O = N(7)-methyl-GMP + diphosphate + H(+). Functionally, nucleoside triphosphate pyrophosphatase that hydrolyzes 7-methyl-GTP (m(7)GTP). May have a dual role in cell division arrest and in preventing the incorporation of modified nucleotides into cellular nucleic acids. This is 7-methyl-GTP pyrophosphatase from Shewanella sp. (strain MR-7).